Reading from the N-terminus, the 432-residue chain is D-amino acid dehydrogenase (432 aa).

3–17 (VVILGSGVVGVASAW) provides a ligand contact to FAD.

The protein belongs to the DadA oxidoreductase family. FAD is required as a cofactor.

It catalyses the reaction a D-alpha-amino acid + A + H2O = a 2-oxocarboxylate + AH2 + NH4(+). It functions in the pathway amino-acid degradation; D-alanine degradation; NH(3) and pyruvate from D-alanine: step 1/1. Functionally, oxidative deamination of D-amino acids. The polypeptide is D-amino acid dehydrogenase (Shigella sonnei (strain Ss046)).